A 359-amino-acid chain; its full sequence is 3-dehydroquinate synthase (359 aa).

Residues 70–75, 105–109, 129–130, Lys142, Lys151, and 169–172 each bind NAD(+); these read DGEQYK, GVIGD, TT, and FYKT. Positions 184, 247, and 264 each coordinate Zn(2+).

The protein belongs to the sugar phosphate cyclases superfamily. Dehydroquinate synthase family. Co(2+) serves as cofactor. The cofactor is Zn(2+). NAD(+) is required as a cofactor.

Its subcellular location is the cytoplasm. It carries out the reaction 7-phospho-2-dehydro-3-deoxy-D-arabino-heptonate = 3-dehydroquinate + phosphate. The protein operates within metabolic intermediate biosynthesis; chorismate biosynthesis; chorismate from D-erythrose 4-phosphate and phosphoenolpyruvate: step 2/7. Catalyzes the conversion of 3-deoxy-D-arabino-heptulosonate 7-phosphate (DAHP) to dehydroquinate (DHQ). The sequence is that of 3-dehydroquinate synthase from Francisella tularensis subsp. tularensis (strain FSC 198).